Consider the following 673-residue polypeptide: uncharacterized protein (673 aa).

Residues 1–95 form a disordered region; it reads MLNGEKSALG…QSSAIADSIG (95 aa). Low complexity predominate over residues 13 to 40; it reads PSNSNSSSKLNAKSPNFIPSSSNIPRSS. Basic and acidic residues predominate over residues 42-60; it reads KTKEHSADRKPHRNSEKKT. The RING-type zinc finger occupies 214 to 273; it reads CPFCLEEKPVAARMSRCGHVYCFSCLLRFVETPTAAEVKAAETSGTKIVKCGHRSCPICW. The interval 649–673 is disordered; it reads SAPSKNSKNKKKKKLVLLSTGAAHR.

It localises to the cytoplasm. Its subcellular location is the nucleus. This is an uncharacterized protein from Schizosaccharomyces pombe (strain 972 / ATCC 24843) (Fission yeast).